Here is a 184-residue protein sequence, read N- to C-terminus: MLELGIFSSNTQNIGQSISERFAGIFPSWPIMLATLVSFTILLVVLTKLIYKPVKKMMKNRRDFIQNNIDESTKQVEKSNELLEKSNIEILDAKIKANTIIKDAQILAEEIKNNSIKDAKDKSKQLLEETKIYIRQQKVLFAKESKKEIVEIAGEMTKKILSESDVKLEDSKFLENLLKNDITK.

A helical membrane pass occupies residues 25–45 (IFPSWPIMLATLVSFTILLVV).

The protein belongs to the ATPase B chain family. As to quaternary structure, F-type ATPases have 2 components, F(1) - the catalytic core - and F(0) - the membrane proton channel. F(1) has five subunits: alpha(3), beta(3), gamma(1), delta(1), epsilon(1). F(0) has three main subunits: a(1), b(2) and c(10-14). The alpha and beta chains form an alternating ring which encloses part of the gamma chain. F(1) is attached to F(0) by a central stalk formed by the gamma and epsilon chains, while a peripheral stalk is formed by the delta and b chains.

The protein resides in the cell membrane. F(1)F(0) ATP synthase produces ATP from ADP in the presence of a proton or sodium gradient. F-type ATPases consist of two structural domains, F(1) containing the extramembraneous catalytic core and F(0) containing the membrane proton channel, linked together by a central stalk and a peripheral stalk. During catalysis, ATP synthesis in the catalytic domain of F(1) is coupled via a rotary mechanism of the central stalk subunits to proton translocation. In terms of biological role, component of the F(0) channel, it forms part of the peripheral stalk, linking F(1) to F(0). This chain is ATP synthase subunit b, found in Mycoplasma mobile (strain ATCC 43663 / 163K / NCTC 11711) (Mesomycoplasma mobile).